The sequence spans 292 residues: MYSAIRSSLPLDGSLGDYSDGTNLPIDACLVLTTDPKPRLRWTSELHERFVDAVTQLGGPDKATPKTIMRTMGVKGLTLYHLKSHLQKFRLGRQSCKESIDNSKDVSCVAESQDTGSSSTSSLRLAAQEQNESYQVTEALRAQMEVQRRLHEQLEVQRRLQLRIEAQGKYLQSILEKACKAIEEQAVAFAGLEAAREELSELAIKASITNGCQGTTSTFDTTKMMIPSLSELAVAIEHKNNCSAESSLTSSTVGSPVSAALMKKRQRGVFGNGDSVVVGHDAGWVMPSSSIG.

In terms of domain architecture, HTH myb-type spans 34 to 94; sequence TDPKPRLRWT…HLQKFRLGRQ (61 aa). Positions 65–90 form a DNA-binding region, H-T-H motif; it reads PKTIMRTMGVKGLTLYHLKSHLQKFR. Residues 137 to 157 adopt a coiled-coil conformation; sequence TEALRAQMEVQRRLHEQLEVQ. Residues 150–155 carry the LHEQLE motif; the sequence is LHEQLE.

It belongs to the MYB-CC family. Homo- and heterodimers. Interacts with PHL2, but not with PHR1.

Its subcellular location is the nucleus. In terms of biological role, transcriptional activator. Probable component of the central regulatory system controlling transcriptional responses to Pi starvation. Binds in a sequence-specific manner to phosphate starvation-regulated promoters. Required for female gametophyte development and function. This chain is Protein PHR1-LIKE 3, found in Arabidopsis thaliana (Mouse-ear cress).